The following is a 344-amino-acid chain: DNA integrity scanning protein DisA (344 aa).

Residues 1-133 enclose the DAC domain; that stretch reads MALLAPGTPI…GRRYLIERPE (133 aa). ATP contacts are provided by residues Gly-61 and 92–96; that span reads TRHRT.

It belongs to the DisA family. In terms of assembly, homooctamer. The cofactor is Mg(2+).

The enzyme catalyses 2 ATP = 3',3'-c-di-AMP + 2 diphosphate. Participates in a DNA-damage check-point. DisA forms globular foci that rapidly scan along the chromosomes searching for lesions. Its function is as follows. Also has diadenylate cyclase activity, catalyzing the condensation of 2 ATP molecules into cyclic di-AMP (c-di-AMP). c-di-AMP likely acts as a signaling molecule that may couple DNA integrity with a cellular process. This is DNA integrity scanning protein DisA from Cutibacterium acnes (strain DSM 16379 / KPA171202) (Propionibacterium acnes).